Here is a 174-residue protein sequence, read N- to C-terminus: 3-hydroxydecanoyl-[acyl-carrier-protein] dehydratase (174 aa).

His-71 is an active-site residue.

Belongs to the thioester dehydratase family. FabA subfamily. Homodimer.

The protein localises to the cytoplasm. The enzyme catalyses a (3R)-hydroxyacyl-[ACP] = a (2E)-enoyl-[ACP] + H2O. It catalyses the reaction (3R)-hydroxydecanoyl-[ACP] = (2E)-decenoyl-[ACP] + H2O. The catalysed reaction is (2E)-decenoyl-[ACP] = (3Z)-decenoyl-[ACP]. The protein operates within lipid metabolism; fatty acid biosynthesis. In terms of biological role, necessary for the introduction of cis unsaturation into fatty acids. Catalyzes the dehydration of (3R)-3-hydroxydecanoyl-ACP to E-(2)-decenoyl-ACP and then its isomerization to Z-(3)-decenoyl-ACP. Can catalyze the dehydratase reaction for beta-hydroxyacyl-ACPs with saturated chain lengths up to 16:0, being most active on intermediate chain length. This is 3-hydroxydecanoyl-[acyl-carrier-protein] dehydratase from Nitrobacter hamburgensis (strain DSM 10229 / NCIMB 13809 / X14).